We begin with the raw amino-acid sequence, 498 residues long: ATP synthase subunit beta, chloroplastic (498 aa).

An ATP-binding site is contributed by 172-179; sequence GGAGVGKT.

The protein belongs to the ATPase alpha/beta chains family. In terms of assembly, F-type ATPases have 2 components, CF(1) - the catalytic core - and CF(0) - the membrane proton channel. CF(1) has five subunits: alpha(3), beta(3), gamma(1), delta(1), epsilon(1). CF(0) has four main subunits: a(1), b(1), b'(1) and c(9-12).

The protein resides in the plastid. It is found in the chloroplast thylakoid membrane. It carries out the reaction ATP + H2O + 4 H(+)(in) = ADP + phosphate + 5 H(+)(out). In terms of biological role, produces ATP from ADP in the presence of a proton gradient across the membrane. The catalytic sites are hosted primarily by the beta subunits. This chain is ATP synthase subunit beta, chloroplastic, found in Nicotiana sp. (Tobacco).